Here is an 848-residue protein sequence, read N- to C-terminus: Adenylate cyclase (848 aa).

A catalytic region spans residues 1 to 535 (MYLYIETLKQ…DVSHHFPLRL (535 aa)). The regulatory stretch occupies residues 541-848 (KALYSPCEIR…DAPLLQQYFS (308 aa)). Histidine 609 carries the phosphohistidine; by CRR modification.

This sequence belongs to the adenylyl cyclase class-1 family.

The protein resides in the cytoplasm. It carries out the reaction ATP = 3',5'-cyclic AMP + diphosphate. The chain is Adenylate cyclase (cyaA) from Escherichia coli O6:H1 (strain CFT073 / ATCC 700928 / UPEC).